The sequence spans 333 residues: Holliday junction branch migration complex subunit RuvB (333 aa).

Residues 1 to 181 (MTRILDNDLI…FGITGHMEYY (181 aa)) form a large ATPase domain (RuvB-L) region. Residues Leu20, Arg21, Gly62, Lys65, Thr66, Thr67, 128-130 (EDF), Arg171, Tyr181, and Arg218 each bind ATP. Thr66 lines the Mg(2+) pocket. Residues 182–252 (QTADLTEIVE…ITDKALTMLD (71 aa)) form a small ATPAse domain (RuvB-S) region. The segment at 255 to 333 (QEGLDYVDQK…HLGYPYEKKH (79 aa)) is head domain (RuvB-H). Positions 291, 310, 312, and 315 each coordinate DNA.

Belongs to the RuvB family. Homohexamer. Forms an RuvA(8)-RuvB(12)-Holliday junction (HJ) complex. HJ DNA is sandwiched between 2 RuvA tetramers; dsDNA enters through RuvA and exits via RuvB. An RuvB hexamer assembles on each DNA strand where it exits the tetramer. Each RuvB hexamer is contacted by two RuvA subunits (via domain III) on 2 adjacent RuvB subunits; this complex drives branch migration. In the full resolvosome a probable DNA-RuvA(4)-RuvB(12)-RuvC(2) complex forms which resolves the HJ.

It localises to the cytoplasm. The catalysed reaction is ATP + H2O = ADP + phosphate + H(+). In terms of biological role, the RuvA-RuvB-RuvC complex processes Holliday junction (HJ) DNA during genetic recombination and DNA repair, while the RuvA-RuvB complex plays an important role in the rescue of blocked DNA replication forks via replication fork reversal (RFR). RuvA specifically binds to HJ cruciform DNA, conferring on it an open structure. The RuvB hexamer acts as an ATP-dependent pump, pulling dsDNA into and through the RuvAB complex. RuvB forms 2 homohexamers on either side of HJ DNA bound by 1 or 2 RuvA tetramers; 4 subunits per hexamer contact DNA at a time. Coordinated motions by a converter formed by DNA-disengaged RuvB subunits stimulates ATP hydrolysis and nucleotide exchange. Immobilization of the converter enables RuvB to convert the ATP-contained energy into a lever motion, pulling 2 nucleotides of DNA out of the RuvA tetramer per ATP hydrolyzed, thus driving DNA branch migration. The RuvB motors rotate together with the DNA substrate, which together with the progressing nucleotide cycle form the mechanistic basis for DNA recombination by continuous HJ branch migration. Branch migration allows RuvC to scan DNA until it finds its consensus sequence, where it cleaves and resolves cruciform DNA. In Streptococcus equi subsp. zooepidemicus (strain MGCS10565), this protein is Holliday junction branch migration complex subunit RuvB.